Reading from the N-terminus, the 99-residue chain is Mitochondrial import receptor subunit TOM9-2 (99 aa).

The Cytoplasmic segment spans residues 2–51 (AAKRIGAGKSGGGDPNILARISNSEIVSQGRRAAGDAVEVSKKLLRSTGK). The chain crosses the membrane as a helical span at residues 52–69 (AAWIAGTTFLILVVPLII). The Mitochondrial intermembrane segment spans residues 70-99 (EMDREAQINEIELQQASLLGAPPSPMQRGL).

Belongs to the Tom22 family. In terms of assembly, forms part of the preprotein translocase complex of the outer mitochondrial membrane (TOM complex) which consists of at least 6 different proteins (TOM5, TOM6, TOM7, TOM20, TOM22/TOM9 and TOM40). In terms of tissue distribution, expressed in young cotyledons, roots, flowers and leaves.

The protein resides in the mitochondrion outer membrane. Central component of the receptor complex responsible for the recognition and translocation of cytosolically synthesized mitochondrial preproteins. Together with TOM20 functions as the transit peptide receptor at the surface of the mitochondrion outer membrane and facilitates the movement of preproteins into the translocation pore. The polypeptide is Mitochondrial import receptor subunit TOM9-2 (TOM9-2) (Arabidopsis thaliana (Mouse-ear cress)).